The chain runs to 100 residues: Small ribosomal subunit protein uS14c (100 aa).

The protein belongs to the universal ribosomal protein uS14 family. Component of the chloroplast small ribosomal subunit (SSU). Mature 70S chloroplast ribosomes of higher plants consist of a small (30S) and a large (50S) subunit. The 30S small subunit contains 1 molecule of ribosomal RNA (16S rRNA) and 24 different proteins. The 50S large subunit contains 3 rRNA molecules (23S, 5S and 4.5S rRNA) and 33 different proteins.

The protein localises to the plastid. It is found in the chloroplast. Its function is as follows. Component of the chloroplast ribosome (chloro-ribosome), a dedicated translation machinery responsible for the synthesis of chloroplast genome-encoded proteins, including proteins of the transcription and translation machinery and components of the photosynthetic apparatus. The sequence is that of Small ribosomal subunit protein uS14c from Spinacia oleracea (Spinach).